Consider the following 96-residue polypeptide: Prokineticin Bm8-a (96 aa).

The first 19 residues, 1-19 (MKCFAQIVVLLLVIAFSHG), serve as a signal peptide directing secretion. 5 disulfide bridges follow: cysteine 26-cysteine 38, cysteine 32-cysteine 50, cysteine 37-cysteine 78, cysteine 60-cysteine 86, and cysteine 80-cysteine 95.

It belongs to the AVIT (prokineticin) family. In terms of tissue distribution, expressed by the skin glands.

The protein localises to the secreted. Its function is as follows. Potent agonist for both PKR1/PROKR1 and PKR2/PROKR2, and inducer of a potent and long-lasting hyperalgesia. Also potentiates capsaicin-induced TRPV1 current, when tested on DRG neurons. At subnanomolar concentrations, this protein both induces potent chemotaxis of macrophages and stimulates LPS-induced production of the pro-inflammatory cytokines IL-1 and IL-12. In vivo, potently stimulates the contraction of the guinea-pig gastrointestinal (GI) smooth muscle (nanomolar concentration). In Bombina maxima (Giant fire-bellied toad), this protein is Prokineticin Bm8-a.